A 36-amino-acid polypeptide reads, in one-letter code: Pancreatic polypeptide (36 aa).

Tyr-36 carries the tyrosine amide modification.

The protein belongs to the NPY family.

The protein resides in the secreted. Functionally, hormone secreted by pancreatic cells that acts as a regulator of pancreatic and gastrointestinal functions. The protein is Pancreatic polypeptide (PPY) of Meleagris gallopavo (Wild turkey).